Consider the following 182-residue polypeptide: UPF0397 protein SPH_0594 (182 aa).

Transmembrane regions (helical) follow at residues 10 to 30, 46 to 66, 73 to 93, 109 to 129, and 148 to 168; these read VVAV…NIPT, LLSI…GHAI, YGLW…VGLF, ILIF…VLAP, and IVAG…LLLA.

The protein belongs to the UPF0397 family.

The protein localises to the cell membrane. The polypeptide is UPF0397 protein SPH_0594 (Streptococcus pneumoniae (strain Hungary19A-6)).